We begin with the raw amino-acid sequence, 722 residues long: Glycine--tRNA ligase beta subunit (722 aa).

Belongs to the class-II aminoacyl-tRNA synthetase family. As to quaternary structure, tetramer of two alpha and two beta subunits.

The protein localises to the cytoplasm. The catalysed reaction is tRNA(Gly) + glycine + ATP = glycyl-tRNA(Gly) + AMP + diphosphate. This chain is Glycine--tRNA ligase beta subunit, found in Xylella fastidiosa (strain M12).